Consider the following 414-residue polypeptide: Serine hydroxymethyltransferase (414 aa).

(6S)-5,6,7,8-tetrahydrofolate is bound by residues Leu121 and 125-127 (GHL). N6-(pyridoxal phosphate)lysine is present on Lys229.

It belongs to the SHMT family. Homodimer. Requires pyridoxal 5'-phosphate as cofactor.

The protein localises to the cytoplasm. The enzyme catalyses (6R)-5,10-methylene-5,6,7,8-tetrahydrofolate + glycine + H2O = (6S)-5,6,7,8-tetrahydrofolate + L-serine. It functions in the pathway one-carbon metabolism; tetrahydrofolate interconversion. The protein operates within amino-acid biosynthesis; glycine biosynthesis; glycine from L-serine: step 1/1. Catalyzes the reversible interconversion of serine and glycine with tetrahydrofolate (THF) serving as the one-carbon carrier. This reaction serves as the major source of one-carbon groups required for the biosynthesis of purines, thymidylate, methionine, and other important biomolecules. Also exhibits THF-independent aldolase activity toward beta-hydroxyamino acids, producing glycine and aldehydes, via a retro-aldol mechanism. The polypeptide is Serine hydroxymethyltransferase (Paracidovorax citrulli (strain AAC00-1) (Acidovorax citrulli)).